The chain runs to 316 residues: Pantothenate kinase (316 aa).

ATP is bound at residue 95 to 102 (GSVAVGKS).

The protein belongs to the prokaryotic pantothenate kinase family.

It localises to the cytoplasm. It catalyses the reaction (R)-pantothenate + ATP = (R)-4'-phosphopantothenate + ADP + H(+). It participates in cofactor biosynthesis; coenzyme A biosynthesis; CoA from (R)-pantothenate: step 1/5. The polypeptide is Pantothenate kinase (Shewanella pealeana (strain ATCC 700345 / ANG-SQ1)).